The chain runs to 414 residues: MSVLQKPRGVKDWYGEELIYFNWTVHQITNLAWKWGFSEVKTPLLEYAEAFKRTNANADIVKKELYEFHDKSNRLLALRPEATAGIVRLVCENKLLQPQNYPLRLFTIGTMYRYERPQSNRYREHYQFSCEVIGDTNPTVLLDTLLLGHAIIQQLGIEGVILKLNNLGNSATIQQWNQALQAYLTQFKAQLTELSQSRLSTNPLRILDDKVDGQLPFISDAPQIEQFLDAEQQALNTWLQQQLTQQQVPFEWNPTLVRGLDYYTGVVFEFVKDDTTVLAGGVYDNLVEELGGTPTKALGFACGIERSINCLSAVKKQAILANQPPRLLVIGLTEAALEKLLQLSLGWRAYHPVTIYPKVIRIINGIRAAQRLGYRFLGVIGGNNLEQQTITVKDLATEQQTTYTWDEFRQRQVL.

Belongs to the class-II aminoacyl-tRNA synthetase family. In terms of assembly, homodimer.

Its subcellular location is the cytoplasm. It catalyses the reaction tRNA(His) + L-histidine + ATP = L-histidyl-tRNA(His) + AMP + diphosphate + H(+). This chain is Histidine--tRNA ligase (hisS), found in Mycoplasma pneumoniae (strain ATCC 29342 / M129 / Subtype 1) (Mycoplasmoides pneumoniae).